Reading from the N-terminus, the 193-residue chain is Thymidine kinase (193 aa).

ATP-binding positions include 14 to 21 and 87 to 90; these read GCMFSGKT and DELH. The active-site Proton acceptor is glutamate 88. Residues cysteine 147, cysteine 150, cysteine 185, and cysteine 188 each coordinate Zn(2+).

This sequence belongs to the thymidine kinase family. Homotetramer.

It is found in the cytoplasm. The enzyme catalyses thymidine + ATP = dTMP + ADP + H(+). In Roseiflexus sp. (strain RS-1), this protein is Thymidine kinase.